The sequence spans 368 residues: Probable magnesium transporter NIPA3 (368 aa).

At 1-18 the chain is on the extracellular side; that stretch reads MASLSGSWRDAYKGMSSD. The chain crosses the membrane as a helical span at residues 19 to 39; sequence NIKGLVLALSSSLFIGASFIV. The Cytoplasmic portion of the chain corresponds to 40 to 66; that stretch reads KKKGLKRAGASGLRAGSGGYSYLLEPL. The helical transmembrane segment at 67 to 87 threads the bilayer; sequence WWVGMITMIVGEIANFAAYAF. Residues 88 to 90 lie on the Extracellular side of the membrane; sequence APA. Residues 91-111 form a helical membrane-spanning segment; sequence ILVTPLGALSIIISAALAHVI. Topologically, residues 112 to 115 are cytoplasmic; sequence LHEK. A helical membrane pass occupies residues 116-136; that stretch reads LHTFGLLGCVLCVVGSITIVL. The Extracellular portion of the chain corresponds to 137–157; it reads HAPQEQEIDSVLQVWNLATEP. The helical transmembrane segment at 158–178 threads the bilayer; that stretch reads AFLLYAAAVVGAAIILIVQFV. The Cytoplasmic segment spans residues 179 to 189; the sequence is PQYGQSHVMVY. Residues 190–210 traverse the membrane as a helical segment; that stretch reads IGVCSLVGSLSVMSVKALGIA. The Extracellular portion of the chain corresponds to 211 to 220; sequence LKLTFSGMNQ. Residues 221-241 form a helical membrane-spanning segment; it reads LIYPQTWVFTLIVLTCVITQM. Residues 242 to 255 lie on the Cytoplasmic side of the membrane; the sequence is NYLNKALDTFNTAV. The helical transmembrane segment at 256-276 threads the bilayer; sequence VSPIYYVMFTSLTILASVIMF. The Extracellular segment spans residues 277–283; sequence KDWDRQD. A helical membrane pass occupies residues 284 to 304; it reads GTQIVTELCGFVTILSGTFLL. Topologically, residues 305–368 are cytoplasmic; it reads HKTKDMVDGS…ILPQDGPEAV (64 aa).

It belongs to the NIPA (TC 2.A.7) family. As to quaternary structure, homodimer.

The protein resides in the cell membrane. The protein localises to the early endosome. Functionally, acts as a Mg(2+) transporter. Can also transport other divalent cations such as Fe(2+), Sr(2+), Ba(2+), Mn(2+) and Co(2+) but to a much less extent than Mg(2+). The protein is Probable magnesium transporter NIPA3 of Arabidopsis thaliana (Mouse-ear cress).